We begin with the raw amino-acid sequence, 338 residues long: Ferrochelatase (338 aa).

Positions 207 and 293 each coordinate Fe cation.

The protein belongs to the ferrochelatase family.

Its subcellular location is the cytoplasm. The catalysed reaction is heme b + 2 H(+) = protoporphyrin IX + Fe(2+). The protein operates within porphyrin-containing compound metabolism; protoheme biosynthesis; protoheme from protoporphyrin-IX: step 1/1. Functionally, catalyzes the ferrous insertion into protoporphyrin IX. The polypeptide is Ferrochelatase (Shewanella denitrificans (strain OS217 / ATCC BAA-1090 / DSM 15013)).